Reading from the N-terminus, the 601-residue chain is DNA ligase (601 aa).

Asp258 lines the ATP pocket. Catalysis depends on Lys260, which acts as the N6-AMP-lysine intermediate. 6 residues coordinate ATP: Arg265, Arg280, Glu310, Phe350, Arg427, and Lys433.

Belongs to the ATP-dependent DNA ligase family. Mg(2+) is required as a cofactor. Ca(2+) serves as cofactor. Requires Mn(2+) as cofactor.

It carries out the reaction ATP + (deoxyribonucleotide)n-3'-hydroxyl + 5'-phospho-(deoxyribonucleotide)m = (deoxyribonucleotide)n+m + AMP + diphosphate.. DNA ligase that seals nicks in double-stranded DNA during DNA replication, DNA recombination and DNA repair. Also has low activity with dATP. Inactive with NAD(+), CTP, GTP, UTP, dCTP, dGTP or dTTP. The sequence is that of DNA ligase from Saccharolobus shibatae (strain ATCC 51178 / DSM 5389 / JCM 8931 / NBRC 15437 / B12) (Sulfolobus shibatae).